The primary structure comprises 254 residues: Receptor expression-enhancing protein 3 (254 aa).

Helical transmembrane passes span 1–21 (MVSW…YPAY), 35–55 (YVRW…ETVA), and 59–79 (LAWF…LLSP). The disordered stretch occupies residues 162 to 232 (DEPVGHRPYQ…QSMKSVKTIK (71 aa)). Over residues 198 to 212 (EQTDEEAEGPFSDDE) the composition is skewed to acidic residues. Residue Thr-200 is modified to Phosphothreonine. Ser-209 bears the Phosphoserine mark.

The protein belongs to the DP1 family.

It is found in the endoplasmic reticulum membrane. Microtubule-binding protein required to ensure proper cell division and nuclear envelope reassembly by sequestering the endoplasmic reticulum away from chromosomes during mitosis. Probably acts by clearing the endoplasmic reticulum membrane from metaphase chromosomes. This is Receptor expression-enhancing protein 3 (Reep3) from Mus musculus (Mouse).